The chain runs to 227 residues: MNLSFFDQFSSPYLMGMPLILPSLLLPTLLFPTPGRRWISNRLSTLQLWVINLITKQLMTPLNKTGHKWALLLTSLILLLLSINLMGLLPYTFTPTTQLSMNMALAFPLWLATLLIGLRNQPSASLAHLLPEGTPTPLIPILIMIETTSLLIRPLALGVRLTANLTAGHLLIQLISTATIALLPTMPSISTLTALILLLLTILEVAVAMIQAYVFVLLLSLYLQENI.

Helical transmembrane passes span Pro-12–Pro-32, Trp-69–Leu-89, Gln-98–Leu-118, Ile-139–Val-159, Leu-170–Ser-190, and Ile-196–Val-216.

This sequence belongs to the ATPase A chain family. In terms of assembly, component of the ATP synthase complex composed at least of ATP5F1A/subunit alpha, ATP5F1B/subunit beta, ATP5MC1/subunit c (homooctomer), MT-ATP6/subunit a, MT-ATP8/subunit 8, ATP5ME/subunit e, ATP5MF/subunit f, ATP5MG/subunit g, ATP5MK/subunit k, ATP5MJ/subunit j, ATP5F1C/subunit gamma, ATP5F1D/subunit delta, ATP5F1E/subunit epsilon, ATP5PF/subunit F6, ATP5PB/subunit b, ATP5PD/subunit d, ATP5PO/subunit OSCP. ATP synthase complex consists of a soluble F(1) head domain (subunits alpha(3) and beta(3)) - the catalytic core - and a membrane F(0) domain - the membrane proton channel (subunits c, a, 8, e, f, g, k and j). These two domains are linked by a central stalk (subunits gamma, delta, and epsilon) rotating inside the F1 region and a stationary peripheral stalk (subunits F6, b, d, and OSCP). Interacts with DNAJC30; interaction is direct.

Its subcellular location is the mitochondrion inner membrane. The catalysed reaction is H(+)(in) = H(+)(out). Functionally, subunit a, of the mitochondrial membrane ATP synthase complex (F(1)F(0) ATP synthase or Complex V) that produces ATP from ADP in the presence of a proton gradient across the membrane which is generated by electron transport complexes of the respiratory chain. ATP synthase complex consist of a soluble F(1) head domain - the catalytic core - and a membrane F(1) domain - the membrane proton channel. These two domains are linked by a central stalk rotating inside the F(1) region and a stationary peripheral stalk. During catalysis, ATP synthesis in the catalytic domain of F(1) is coupled via a rotary mechanism of the central stalk subunits to proton translocation. With the subunit c (ATP5MC1), forms the proton-conducting channel in the F(0) domain, that contains two crucial half-channels (inlet and outlet) that facilitate proton movement from the mitochondrial intermembrane space (IMS) into the matrix. Protons are taken up via the inlet half-channel and released through the outlet half-channel, following a Grotthuss mechanism. The sequence is that of ATP synthase F(0) complex subunit a from Coturnix japonica (Japanese quail).